A 248-amino-acid chain; its full sequence is MRSLSLFTALLAGQAFAYPKPVLQSSTRRDWPTINEFLTELAEIMPIGDTVSAACDLIGDAEDVAADLFDISNTENDACGDVTVLFARGTCDPGNVGVLVGPWFFNSLETALPNKKVGVKGVPYPASVQGFLSGSVQPGIDMANQIKSVISSCPNTKLVLGGYSQGSMVVHNAASNLDAATMAKVSAVVLFGDPYDGRPVANYDASKVLVVCHDGDNICQGGDFILLPHLTYAEDADTAAAFVKPLVS.

Positions 1-17 (MRSLSLFTALLAGQAFA) are cleaved as a signal peptide. The cysteines at positions 79 and 153 are disulfide-linked. The Nucleophile role is filled by serine 164. Cysteine 212 and cysteine 219 form a disulfide bridge. Residue aspartate 216 is part of the active site. The active-site Proton donor/acceptor is histidine 229.

This sequence belongs to the cutinase family. Post-translationally, the 2 disulfide bonds play a critical role in holding the catalytic residues in juxta-position; reduction of the disulfide bridges results in the complete inactivation of the enzyme.

The protein localises to the secreted. The catalysed reaction is cutin + H2O = cutin monomers.. Functionally, catalyzes the hydrolysis of complex carboxylic polyesters found in the cell wall of plants. May degrade cutin, a macromolecule that forms the structure of the plant cuticle. May also degrade suberin, a specialized macromolecule found in the cell wall of various plant tissues. The chain is Cutinase cut1 from Trichoderma harzianum (Hypocrea lixii).